Here is a 492-residue protein sequence, read N- to C-terminus: Probable small intestine urate exporter (492 aa).

The disordered stretch occupies residues 1 to 20; sequence MSTGADLKAREGDIPSDNMT. N18, N44, N53, N63, N72, and N87 each carry an N-linked (GlcNAc...) asparagine glycan. Helical transmembrane passes span 112-132, 134-154, 156-176, 198-218, 225-245, 287-307, 327-347, 363-383, 393-413, 426-446, and 456-476; these read LSYGSFIAPIPTGYVAGVFGA, YVVGLGLLISSVLTLFIPLAA, AGVALLIVLRVIQGMAQVMVL, IAASGSMLGTFLVLIAGGLIC, YIFYIFGGIGCACCLLWFPLV, LPLWAIVVSYFCEYWLLSTVM, ILSALPFMFGCVCIILGGLLA, KLFTAVGVLASSGILLPLPWV, FLVLSSVFASLCDSGALINFL, LLQVFSYLAGGIAPTVAGFFI, and NVFFLAAAIDVVGLLFYLIFS.

It belongs to the major facilitator superfamily. Sodium/anion cotransporter family. In terms of tissue distribution, expressed in the small intestine (at protein level).

It is found in the apical cell membrane. The enzyme catalyses 3 Na(+)(out) + phosphate(out) = 3 Na(+)(in) + phosphate(in). It catalyses the reaction urate(out) + n chloride(in) = urate(in) + n chloride(out). The catalysed reaction is L-thyroxine(out) = L-thyroxine(in). It carries out the reaction 3,3',5-triiodo-L-thyronine(out) = 3,3',5-triiodo-L-thyronine(in). Its function is as follows. Acts as a membrane potential-dependent organic anion transporter, the transport requires a low concentration of chloride ions. Mediates chloride-dependent transport of urate. Mediates sodium-independent high affinity transport of thyroid hormones including L-thyroxine (T4) and 3,3',5-triiodo-L-thyronine (T3). Can actively transport inorganic phosphate into cells via Na(+) cotransport. In Mus musculus (Mouse), this protein is Probable small intestine urate exporter (Slc17a4).